A 219-amino-acid chain; its full sequence is Octanoyltransferase (219 aa).

The region spanning 31–219 (EDLPGFLVFC…KLKRRLLEVL (189 aa)) is the BPL/LPL catalytic domain. Substrate is bound by residues 69–76 (RGGRATYH), 153–155 (SVG), and 166–168 (GAA). C184 functions as the Acyl-thioester intermediate in the catalytic mechanism.

The protein belongs to the LipB family.

Its subcellular location is the cytoplasm. It catalyses the reaction octanoyl-[ACP] + L-lysyl-[protein] = N(6)-octanoyl-L-lysyl-[protein] + holo-[ACP] + H(+). Its pathway is protein modification; protein lipoylation via endogenous pathway; protein N(6)-(lipoyl)lysine from octanoyl-[acyl-carrier-protein]: step 1/2. Catalyzes the transfer of endogenously produced octanoic acid from octanoyl-acyl-carrier-protein onto the lipoyl domains of lipoate-dependent enzymes. Lipoyl-ACP can also act as a substrate although octanoyl-ACP is likely to be the physiological substrate. In Bdellovibrio bacteriovorus (strain ATCC 15356 / DSM 50701 / NCIMB 9529 / HD100), this protein is Octanoyltransferase.